The following is a 380-amino-acid chain: 1-deoxy-D-xylulose 5-phosphate reductoisomerase (380 aa).

The NADPH site is built by Thr10, Gly11, Ser12, Ile13, Gly36, Arg37, Asn38, and Asn120. Lys121 contributes to the 1-deoxy-D-xylulose 5-phosphate binding site. Residue Glu122 coordinates NADPH. Asp146 lines the Mn(2+) pocket. Residues Ser147, Glu148, Ser172, and His195 each contribute to the 1-deoxy-D-xylulose 5-phosphate site. Residue Glu148 participates in Mn(2+) binding. Position 201 (Gly201) interacts with NADPH. 1-deoxy-D-xylulose 5-phosphate is bound by residues Ser208, Asn213, Lys214, and Glu217. Glu217 is a Mn(2+) binding site.

Belongs to the DXR family. Mg(2+) serves as cofactor. Mn(2+) is required as a cofactor.

The catalysed reaction is 2-C-methyl-D-erythritol 4-phosphate + NADP(+) = 1-deoxy-D-xylulose 5-phosphate + NADPH + H(+). It participates in isoprenoid biosynthesis; isopentenyl diphosphate biosynthesis via DXP pathway; isopentenyl diphosphate from 1-deoxy-D-xylulose 5-phosphate: step 1/6. Functionally, catalyzes the NADPH-dependent rearrangement and reduction of 1-deoxy-D-xylulose-5-phosphate (DXP) to 2-C-methyl-D-erythritol 4-phosphate (MEP). The chain is 1-deoxy-D-xylulose 5-phosphate reductoisomerase from Listeria monocytogenes serotype 4b (strain F2365).